Consider the following 98-residue polypeptide: NADH-ubiquinone oxidoreductase chain 4L (98 aa).

3 helical membrane-spanning segments follow: residues 1–21 (MMSINLNLIMAFSLALAGVLI), 28–48 (STLLCLEGMMLSLFILMALII), and 59–79 (APLILLVFSACEAGVGLALLV).

It belongs to the complex I subunit 4L family. In terms of assembly, core subunit of respiratory chain NADH dehydrogenase (Complex I) which is composed of 45 different subunits.

It localises to the mitochondrion inner membrane. It catalyses the reaction a ubiquinone + NADH + 5 H(+)(in) = a ubiquinol + NAD(+) + 4 H(+)(out). Functionally, core subunit of the mitochondrial membrane respiratory chain NADH dehydrogenase (Complex I) which catalyzes electron transfer from NADH through the respiratory chain, using ubiquinone as an electron acceptor. Part of the enzyme membrane arm which is embedded in the lipid bilayer and involved in proton translocation. The chain is NADH-ubiquinone oxidoreductase chain 4L (MT-ND4L) from Lagostrophus fasciatus (Banded hare-wallaby).